A 122-amino-acid polypeptide reads, in one-letter code: Large ribosomal subunit protein uL14 (122 aa).

The protein belongs to the universal ribosomal protein uL14 family. In terms of assembly, part of the 50S ribosomal subunit. Forms a cluster with proteins L3 and L19. In the 70S ribosome, L14 and L19 interact and together make contacts with the 16S rRNA in bridges B5 and B8.

In terms of biological role, binds to 23S rRNA. Forms part of two intersubunit bridges in the 70S ribosome. The sequence is that of Large ribosomal subunit protein uL14 from Elusimicrobium minutum (strain Pei191).